The sequence spans 818 residues: Protein TOC75-3, chloroplastic (818 aa).

The N-terminal 79 residues, 1–79, are a transit peptide targeting the chloroplast; sequence MAAFSVNGQL…LKNLAKPLAV (79 aa). Residues 15 to 41 are compositionally biased toward low complexity; sequence TSSTASTSLSSRRKFLSPSSSRLPRIS. A disordered region spans residues 15–67; it reads TSSTASTSLSSRRKFLSPSSSRLPRISTQSPRVPSIKCSKSLPNRDTETSSKD. Basic and acidic residues predominate over residues 57 to 67; the sequence is PNRDTETSSKD. A chloroplast; outer membrane-targeting transit peptide spans 80–140; that stretch reads ASVSSAASFF…KLFSPSPAVA (61 aa). POTRA domains follow at residues 141–246, 247–364, and 365–448; these read DEEQ…FAES, TWQS…VVEG, and DITQ…LKEL. At 141–473 the chain is on the chloroplast intermembrane side; sequence DEEQSPDWDS…GRGGAPTLAS (333 aa). Residues 474–482 form a beta stranded membrane-spanning segment; it reads FQPGGSVTF. The Cytoplasmic segment spans residues 483-509; sequence EHRNLQGLNRSLMGSVTTSNFLNPQDD. Residues 510–518 traverse the membrane as a beta stranded segment; sequence LSFKLEYVH. The Chloroplast intermembrane segment spans residues 519 to 562; that stretch reads PYLDGVYNPRNRTFKTSCFNSRKLSPVFTGGPGVEEVPPIWVDR. The beta stranded transmembrane segment at 563-570 threads the bilayer; that stretch reads AGVKANIT. At 571 to 578 the chain is on the cytoplasmic side; sequence ENFTRQSK. The beta stranded transmembrane segment at 579-586 threads the bilayer; sequence FTYGLVME. Over 587 to 693 the chain is Chloroplast intermembrane; the sequence is EITTRDESSH…VEQGAGKSPP (107 aa). Residues 694–702 form a beta stranded membrane-spanning segment; it reads PVLVLHGHY. Residues 703-714 lie on the Cytoplasmic side of the membrane; it reads GGCVGDLPSYDA. Residues 715 to 723 form a beta stranded membrane-spanning segment; the sequence is FVLGGPYSV. Topologically, residues 724-785 are chloroplast intermembrane; sequence RGYNMGELGA…VYRRTGQGSS (62 aa). A beta stranded transmembrane segment spans residues 786–792; sequence YGAGVKL. Residues 793-806 are Cytoplasmic-facing; that stretch reads GLVRAEYAVDHNNG. A beta stranded membrane pass occupies residues 807–814; that stretch reads TGALFFRF. The Chloroplast intermembrane portion of the chain corresponds to 815 to 818; sequence GERY.

Belongs to the TOC75 family. Part of the TOC core complex that includes a protein for the specific recognition of transit peptides surrounded by a ring composed of four proteins forming translocation channels, and four to five GTP-binding proteins providing energy. This core complex can interact with components of the TIC complex to form a larger import complex. Chloroplastic protein precursors such as prSS (precursor of the RuBisCO small subunit) also interact with these complexes. The TOC complex contains a specific subset of polar lipids such as digalactosyldiacylglyceride (DGDG), phosphatidylcholine (PC) and phosphatidylglycerol (PG). TOC75-3 interacts with TOC34/OEP34, TOC159/TOC86, TOC132 and TOC120. Interacts with SP1. Interacts with TIC236. In terms of tissue distribution, mostly expressed in young and actively dividing photosynthetic tissues and, to a lower extent, in old leaves and roots. Particularly low levels in leaves after etiolation.

It is found in the plastid. The protein resides in the chloroplast outer membrane. Essential protein. Mediates the insertion of proteins targeted to the outer membrane of chloroplasts. Required for the import of protein precursors into chloroplasts. Forms the voltage-dependent preprotein translocation channels (hydrophilic beta barrel) of the TOC complex in the chloroplastic outer membrane. The chain is Protein TOC75-3, chloroplastic from Arabidopsis thaliana (Mouse-ear cress).